Here is a 235-residue protein sequence, read N- to C-terminus: Large ribosomal subunit protein uL1 (235 aa).

It belongs to the universal ribosomal protein uL1 family. As to quaternary structure, part of the 50S ribosomal subunit.

Its function is as follows. Binds directly to 23S rRNA. The L1 stalk is quite mobile in the ribosome, and is involved in E site tRNA release. Functionally, protein L1 is also a translational repressor protein, it controls the translation of the L11 operon by binding to its mRNA. The sequence is that of Large ribosomal subunit protein uL1 from Mycobacteroides abscessus (strain ATCC 19977 / DSM 44196 / CCUG 20993 / CIP 104536 / JCM 13569 / NCTC 13031 / TMC 1543 / L948) (Mycobacterium abscessus).